Reading from the N-terminus, the 214-residue chain is Large ribosomal subunit protein uL3 (214 aa).

The interval 131 to 155 (GAQRTSHGNSRSHRVPGSIGMAQDP) is disordered. Gln153 bears the N5-methylglutamine mark.

Belongs to the universal ribosomal protein uL3 family. In terms of assembly, part of the 50S ribosomal subunit. Forms a cluster with proteins L14 and L19. In terms of processing, methylated by PrmB.

Its function is as follows. One of the primary rRNA binding proteins, it binds directly near the 3'-end of the 23S rRNA, where it nucleates assembly of the 50S subunit. The sequence is that of Large ribosomal subunit protein uL3 from Neisseria meningitidis serogroup C (strain 053442).